The chain runs to 104 residues: Turripeptide OL55 (104 aa).

Post-translationally, contains 8 disulfide bonds. Expressed by the venom duct.

The protein resides in the secreted. Acts as a neurotoxin by inhibiting an ion channel. The protein is Turripeptide OL55 of Iotyrris olangoensis (Sea snail).